The primary structure comprises 293 residues: tRNA pseudouridine synthase A (293 aa).

Catalysis depends on Asp60, which acts as the Nucleophile. Tyr118 is a binding site for substrate.

This sequence belongs to the tRNA pseudouridine synthase TruA family. In terms of assembly, homodimer.

It carries out the reaction uridine(38/39/40) in tRNA = pseudouridine(38/39/40) in tRNA. Functionally, formation of pseudouridine at positions 38, 39 and 40 in the anticodon stem and loop of transfer RNAs. The protein is tRNA pseudouridine synthase A of Rippkaea orientalis (strain PCC 8801 / RF-1) (Cyanothece sp. (strain PCC 8801)).